Consider the following 831-residue polypeptide: Probable basic-leucine zipper transcription factor P (831 aa).

Disordered stretches follow at residues 1–33 and 54–166; these read MNHRIEDITSNPSSPSPNSPFSSPQVSLQPSII and NITS…IASR. Residues 54-85 show a composition bias toward low complexity; the sequence is NITSSPSTSSSPPISTTTTTTTTTTTTATAKK. Basic and acidic residues predominate over residues 87–96; the sequence is NSKEKKKTTN. Residues 97–129 are compositionally biased toward low complexity; the sequence is KDNNNNNNNNNSNNQQQQQQQQQQQQQQQQQQQ. The stretch at 101–141 forms a coiled coil; it reads NNNNNNNSNNQQQQQQQQQQQQQQQQQQQYEEEDDDEEDEG. Positions 130-143 are enriched in acidic residues; the sequence is YEEEDDDEEDEGGD. Residues 144–154 show a composition bias toward basic and acidic residues; the sequence is DNTKVGKGEKM. Residues 151–214 form the bZIP domain; it reads GEKMKARRTN…LELLKFSQEV (64 aa). A basic motif region spans residues 153 to 173; it reads KMKARRTNQNIASRNYRQRKK. The tract at residues 176–183 is leucine-zipper; the sequence is IKEMEDKI. Low complexity-rich tracts occupy residues 469–484 and 497–510; these read SSSSSSSSSSMSSSTS and SSSNSSPSSLSASS. Disordered stretches follow at residues 469–510, 658–697, 715–771, and 787–810; these read SSSS…SASS, QQQAAQQQSPIQTQLSPPQHITPQHTPQQHIQQQQQHQNY, DATN…NTNK, and SLFSHQHQQQNSQSPTLPPSQNDS. Residues 601 to 664 are a coiled coil; sequence AQQHAQQQAQ…QAAQQQAAQQ (64 aa). 3 stretches are compositionally biased toward low complexity: residues 674–695, 720–750, and 787–800; these read PPQHITPQHTPQQHIQQQQQHQ, NNNNNNNNNNNNNNNNNNNNNNNNNNNNNNN, and SLFSHQHQQQNSQS.

Belongs to the bZIP family.

It is found in the nucleus. Functionally, probable transcriptional regulator. This chain is Probable basic-leucine zipper transcription factor P (bzpP), found in Dictyostelium discoideum (Social amoeba).